Here is a 2248-residue protein sequence, read N- to C-terminus: Zinc finger protein lin-13 (2248 aa).

The tract at residues 1 to 189 is disordered; sequence MDEFELFQQL…TYASQYSRPP (189 aa). The span at 29 to 38 shows a compositional bias: polar residues; it reads QQANNNQSAP. Over residues 54–92 the composition is skewed to basic and acidic residues; sequence KQREEEEAQRLADFMQKDMKEPAVKRKRGSEEYKKDPLE. The span at 145–155 shows a compositional bias: acidic residues; sequence ELDENYMEENE. The Required for interaction with hpl-2 isoform a motif lies at 440–444; it reads PLVPV. The C2H2-type 1 zinc-finger motif lies at 503–525; sequence HTCIKCGKTFGTEFMLKHHAQSH. Positions 603-665 are disordered; sequence KTKKENRNIT…FTSSKQKKKR (63 aa). Over residues 605–620 the composition is skewed to basic and acidic residues; sequence KKENRNITDSNEKEFS. 6 C2H2-type zinc fingers span residues 812–837, 959–982, 1140–1162, 1556–1578, 1601–1623, and 1657–1680; these read VRCIDPECKAHLCSVISLKTHLSDVH, YSCSWCDREYESLNQFVDHLTRFH, LMCYMCELTFDSYDELTHHMDDH, FKCQKCSLAFYTNGSLESHMRDH, WLCRNCCVVFENQPKYQKHMAIH, and YSCGTCLCTFASDLALFDHLSVAH. Over residues 1859–1877 the composition is skewed to polar residues; the sequence is PRSSLQTNGSSMGSVTTNG. A disordered region spans residues 1859–1900; sequence PRSSLQTNGSSMGSVTTNGGRVVRPSPPNSMNVTLRRAPPQQ.

In terms of assembly, interacts (via PLVPV motif) with chromobox protein homolog hpl-2 (via chromo (shadow subtype) domain); the interaction is direct and influences localization of hpl-2 to nuclear foci. As to expression, in the L3 stage, expressed in syncytial hypodermal cell 7, body wall muscles, intestinal cells, distal tip cells and many neurons.

It localises to the nucleus. Functionally, involved in repression of vulval fate, possibly by a tumor suppressor protein Rb-mediated mechanism. May act in a common pathway with retinoblastoma-like protein homolog lin-35 and hpl-2 to influence the ER stress response in the intestine. Plays a role in recruiting chromobox protein homolog hpl-2 to specific chromatin sites. The polypeptide is Zinc finger protein lin-13 (lin-13) (Caenorhabditis elegans).